The chain runs to 250 residues: Peptidyl-tRNA hydrolase (250 aa).

Tyr14 contributes to the tRNA binding site. The Proton acceptor role is filled by His19. TRNA contacts are provided by Phe64, Asn66, and Asn112. The disordered stretch occupies residues 192–250; sequence MGDGNQRPGGVKTDPAQLEKAPPKAQSHIRQARQNQKKPNIPESGPMAEMLKKLLGKKD. Polar residues predominate over residues 219-229; it reads HIRQARQNQKK. Basic and acidic residues predominate over residues 241 to 250; it reads MLKKLLGKKD.

It belongs to the PTH family. In terms of assembly, monomer.

The protein resides in the cytoplasm. It catalyses the reaction an N-acyl-L-alpha-aminoacyl-tRNA + H2O = an N-acyl-L-amino acid + a tRNA + H(+). Its function is as follows. Hydrolyzes ribosome-free peptidyl-tRNAs (with 1 or more amino acids incorporated), which drop off the ribosome during protein synthesis, or as a result of ribosome stalling. In terms of biological role, catalyzes the release of premature peptidyl moieties from peptidyl-tRNA molecules trapped in stalled 50S ribosomal subunits, and thus maintains levels of free tRNAs and 50S ribosomes. This Brucella canis (strain ATCC 23365 / NCTC 10854 / RM-666) protein is Peptidyl-tRNA hydrolase.